The primary structure comprises 286 residues: uncharacterized protein (286 aa).

Belongs to the chlamydial CPn_0389/CT_041/TC_0311 family.

This is an uncharacterized protein from Chlamydia muridarum (strain MoPn / Nigg).